The sequence spans 237 residues: Phosphoribosylaminoimidazole-succinocarboxamide synthase (237 aa).

Belongs to the SAICAR synthetase family.

The catalysed reaction is 5-amino-1-(5-phospho-D-ribosyl)imidazole-4-carboxylate + L-aspartate + ATP = (2S)-2-[5-amino-1-(5-phospho-beta-D-ribosyl)imidazole-4-carboxamido]succinate + ADP + phosphate + 2 H(+). Its pathway is purine metabolism; IMP biosynthesis via de novo pathway; 5-amino-1-(5-phospho-D-ribosyl)imidazole-4-carboxamide from 5-amino-1-(5-phospho-D-ribosyl)imidazole-4-carboxylate: step 1/2. This Campylobacter fetus subsp. fetus (strain 82-40) protein is Phosphoribosylaminoimidazole-succinocarboxamide synthase.